Here is a 26-residue protein sequence, read N- to C-terminus: M-lycotoxin-Ls2a (26 aa).

In terms of tissue distribution, expressed by the venom gland.

It is found in the secreted. Its subcellular location is the target cell membrane. Its function is as follows. Forms pore that permeabilize the cell membrane. Promotes efflux of calcium from synaptosomes, causes hemolysis, and dissipates voltage gradients across muscle membrane. Potently inhibits the growth of bacteria and yeast. May function both in the prey capture strategy as well as protection from infectious organisms arising from prey ingestion. This is M-lycotoxin-Ls2a from Lycosa singoriensis (Wolf spider).